The following is a 273-amino-acid chain: MEILRTTDELRKFRAAVSQKVGFVPTMGALHAGHISLIKRCKDENEITIVSTFVNPTQFLAGEDLDKYPKNEAADIKICENLEVDAIFIPKADEFYEDDEPKISAPKSLSAILEGATRPGHFDGVLQVLNKLFNLTKPKNVYMGKKDAQQLTIVRNMVQNFFMDINVNACEIVRENDGLALSSRNIYLDEEQKMLALKLSRSLLKAKNLVDASETDINVIKTAMLKILEPLKVDYIAFVDRNFKEISKIEVGNSIILVAAYVDKTRLIDNIWL.

27–34 contributes to the ATP binding site; the sequence is MGALHAGH. H34 serves as the catalytic Proton donor. Q58 provides a ligand contact to (R)-pantoate. Q58 provides a ligand contact to beta-alanine. Position 144–147 (144–147) interacts with ATP; the sequence is GKKD. Q150 serves as a coordination point for (R)-pantoate. ATP contacts are provided by residues V173 and 181 to 184; that span reads LSSR.

It belongs to the pantothenate synthetase family. In terms of assembly, homodimer.

It is found in the cytoplasm. It catalyses the reaction (R)-pantoate + beta-alanine + ATP = (R)-pantothenate + AMP + diphosphate + H(+). Its pathway is cofactor biosynthesis; (R)-pantothenate biosynthesis; (R)-pantothenate from (R)-pantoate and beta-alanine: step 1/1. Its function is as follows. Catalyzes the condensation of pantoate with beta-alanine in an ATP-dependent reaction via a pantoyl-adenylate intermediate. In Campylobacter hominis (strain ATCC BAA-381 / DSM 21671 / CCUG 45161 / LMG 19568 / NCTC 13146 / CH001A), this protein is Pantothenate synthetase.